The following is a 274-amino-acid chain: ATP synthase subunit a (274 aa).

5 helical membrane passes run 43–63, 103–123, 149–169, 223–243, and 245–265; these read TLNIDSLFFSVVLGLAFLLVF, VIAPLALTVFVWVLLMNMMDL, DVSITLSMALGVFILIIFYSI, LIFILIAGLLPWWSQWMLSVP, and AIFHILIITLQAFIFMVLTIV.

Belongs to the ATPase A chain family. As to quaternary structure, F-type ATPases have 2 components, CF(1) - the catalytic core - and CF(0) - the membrane proton channel. CF(1) has five subunits: alpha(3), beta(3), gamma(1), delta(1), epsilon(1). CF(0) has three main subunits: a(1), b(2) and c(9-12). The alpha and beta chains form an alternating ring which encloses part of the gamma chain. CF(1) is attached to CF(0) by a central stalk formed by the gamma and epsilon chains, while a peripheral stalk is formed by the delta and b chains.

The protein resides in the cell inner membrane. Key component of the proton channel; it plays a direct role in the translocation of protons across the membrane. This Yersinia pestis bv. Antiqua (strain Antiqua) protein is ATP synthase subunit a.